A 702-amino-acid polypeptide reads, in one-letter code: Protein sepa-1 (702 aa).

The segment at 39 to 160 (RQRFCYEKTD…KESTSYGQFR (122 aa)) is required for self-association and interaction with pgl-3. 3 consecutive short sequence motifs (LIR) follow at residues 107–110 (FVEV), 247–250 (FQKI), and 298–301 (FGFV). Positions 450 to 471 (AKDPEEPTTAASEGGNTYGYQE) are disordered. The span at 458 to 468 (TAASEGGNTYG) shows a compositional bias: polar residues. An LIR 4 motif is present at residues 469–472 (YQEL). A coiled-coil region spans residues 508–543 (AAMDKKKKRRELKSRLNKINAQIDELEKRRMERAGK). The interval 545–564 (QVVSSSVPSEEAAQVEAPAS) is disordered. Residues 597-674 (NTSKEWIVED…TVDQILKKTL (78 aa)) enclose the KIX domain. A compositionally biased stretch (basic and acidic residues) spans 675-685 (KKDQRATEHNH). Positions 675-702 (KKDQRATEHNHQQPTQSSDELAKNHEKN) are disordered.

In terms of assembly, self-associates. Interacts (via the LIR motifs) with lgg-1; the interaction is direct. Interacts (via the LIR motifs) with lgg-2; the interaction is direct. Interacts with pgl-3; interaction is enhanced in the presence of RNA. Interacts with epg-2; may be modulated by prmt-1. In terms of processing, degraded by autophagy.

It localises to the nucleus. It is found in the cytoplasm. Its subcellular location is the cytoplasmic granule. Its function is as follows. Adapter protein that connects P-granules in somatic cells with the autophagic machinery. Association with other adapters such as epg-2 and P-granule components such as pgl-3 is required for the accumulation and degradation of P-granules by autophagy in somatic cells. This ensures exclusive localization of the P-granules in germ cells. The chain is Protein sepa-1 from Caenorhabditis elegans.